Here is a 971-residue protein sequence, read N- to C-terminus: UPF0182 protein RER_22310 (971 aa).

7 helical membrane passes run 16–36 (ILLVVAVVVAALLLVGPRLIG), 61–81 (FVLFLVVGIVVGAIVWLAMLL), 112–132 (LFGVIIPVAIGILSGLIAQAN), 172–192 (WLFVSILLAFVANLVTHYVFG), 209–229 (VQLAVIAGTFVLLKAVAYWFD), 257–277 (AKLILLSIAVICALAFFASIF), and 286–306 (MAVALLVLSSVLVGAVYPMIV). The interval 890–927 (GSAATVTQPAPDPDTGAQPETPTTPTAPAPPASSDDVT) is disordered.

This sequence belongs to the UPF0182 family.

The protein resides in the cell membrane. In Rhodococcus erythropolis (strain PR4 / NBRC 100887), this protein is UPF0182 protein RER_22310.